The chain runs to 447 residues: Putative branched-chain amino acid carrier protein SSP1343 (447 aa).

Helical transmembrane passes span 6-26 (WIIGFTLFAMFFGAGNLIFPP), 40-60 (ILAFALTGIGLPLLGVIVGAL), 74-94 (PKFSIIFLIIIYLTIGPLFAI), 116-136 (LALFIFTVIYFLIVLYLCINP), 143-163 (IGSLLTPLLLITILAMIVKGF), 192-212 (GYLTMDAIAAIAFSMIVVNAV), 228-248 (LMAGIIAAVALMFIYISLGYI), 289-309 (LLGIIVALACLTTACGLVVAV), 324-344 (IYVIIFTLISFILANQGLNSV), 349-369 (VPVLSIVYPIAITSVLLILLA), 381-401 (IPVAIVSIVSILSMIHTQGWI), and 416-436 (LEWFPIAIVTTIIGYIVAAMV).

It belongs to the branched chain amino acid transporter family.

The protein resides in the cell membrane. Its function is as follows. Component of the transport system for branched-chain amino acids (leucine, isoleucine and valine), which is coupled to a proton motive force. In Staphylococcus saprophyticus subsp. saprophyticus (strain ATCC 15305 / DSM 20229 / NCIMB 8711 / NCTC 7292 / S-41), this protein is Putative branched-chain amino acid carrier protein SSP1343.